Here is a 240-residue protein sequence, read N- to C-terminus: Coiled-coil domain-containing protein 152 (240 aa).

Positions 55-223 form a coiled coil; that stretch reads MQTKEVAMKQ…LEQRLSVSKD (169 aa).

This chain is Coiled-coil domain-containing protein 152 (CCDC152), found in Bos taurus (Bovine).